A 114-amino-acid chain; its full sequence is Large ribosomal subunit protein bL19 (114 aa).

The protein belongs to the bacterial ribosomal protein bL19 family.

This protein is located at the 30S-50S ribosomal subunit interface and may play a role in the structure and function of the aminoacyl-tRNA binding site. The sequence is that of Large ribosomal subunit protein bL19 from Clostridium botulinum (strain ATCC 19397 / Type A).